The chain runs to 446 residues: Neuropeptide Y receptor type 5 (446 aa).

Residues M1–Y42 lie on the Extracellular side of the membrane. 2 N-linked (GlcNAc...) asparagine glycosylation sites follow: N10 and N17. A helical transmembrane segment spans residues F43 to L63. The Cytoplasmic portion of the chain corresponds to M64–N77. A helical membrane pass occupies residues F78–T98. The Extracellular segment spans residues L99–M117. A disulfide bridge connects residues C114 and C198. The helical transmembrane segment at P118 to V138 threads the bilayer. The Cytoplasmic portion of the chain corresponds to R139–G156. Residues Y157–F177 traverse the membrane as a helical segment. Topologically, residues H178–R208 are extracellular. A helical transmembrane segment spans residues I209–V229. Topologically, residues S230–R369 are cytoplasmic. Residues R297–P325 are disordered. A helical membrane pass occupies residues L370 to V390. Topologically, residues T391 to Y407 are extracellular. Residues C408–L428 traverse the membrane as a helical segment. Topologically, residues N429–S446 are cytoplasmic. The S-palmitoyl cysteine moiety is linked to residue C442.

The protein belongs to the G-protein coupled receptor 1 family.

The protein localises to the cell membrane. Receptor for neuropeptide Y and peptide YY. The activity of this receptor is mediated by G proteins that inhibit adenylate cyclase activity. Seems to be associated with food intake. Could be involved in feeding disorders. The chain is Neuropeptide Y receptor type 5 (NPY5R) from Sus scrofa (Pig).